Here is a 407-residue protein sequence, read N- to C-terminus: Serine/threonine transporter SstT (407 aa).

Transmembrane regions (helical) follow at residues 14-34, 48-68, 82-102, 141-161, 192-212, 216-236, 290-310, 316-336, and 363-383; these read GSLV…ATVS, FVGA…AASI, IVIL…LMSF, AVLT…GLAL, IGIF…AIAG, LLLV…PAIV, IPLG…ILTL, MGIQ…GVSA, and VAMQ…SAET.

This sequence belongs to the dicarboxylate/amino acid:cation symporter (DAACS) (TC 2.A.23) family.

It is found in the cell inner membrane. The catalysed reaction is L-serine(in) + Na(+)(in) = L-serine(out) + Na(+)(out). It catalyses the reaction L-threonine(in) + Na(+)(in) = L-threonine(out) + Na(+)(out). In terms of biological role, involved in the import of serine and threonine into the cell, with the concomitant import of sodium (symport system). This is Serine/threonine transporter SstT from Shewanella halifaxensis (strain HAW-EB4).